The sequence spans 349 residues: Increased DNA methylation 2 (349 aa).

A disordered region spans residues 210–230 (EDNAGTCTSGEESDVAAKPEV). A sHSP domain is found at 233–349 (EAHGGLMVGL…VMKNLQKQTV (117 aa)).

It belongs to the small heat shock protein (HSP20) family. Homodimer or oligomer. May form an 16-mer complex. Interacts with MBD7 (via C-terminus). Interacts with IDM1 (via N-terminus). Interacts with IMD3. Part of a complex made of MBD7, IDM1, IDM2, IDM3 and ROS1. As to expression, expressed in cotyledons and hypocotyls in young seedlings.

It localises to the nucleus. The protein resides in the nucleoplasm. Its function is as follows. Prevents DNA hypermethylation and transcriptional silencing of transgenes and of some endogenous genes. May act as a molecular chaperone of IDM1, regulating its H3K18 acetylation activity. The chain is Increased DNA methylation 2 from Arabidopsis thaliana (Mouse-ear cress).